Here is an 865-residue protein sequence, read N- to C-terminus: Probable alpha/beta-glucosidase ARB_02101 (865 aa).

A signal peptide spans 1–21; the sequence is MFGRTLALAAVFATTVLSAAA. Residues Asn101 and Asn299 are each glycosylated (N-linked (GlcNAc...) asparagine). Asp428 acts as the Nucleophile in catalysis. Glu431 is an active-site residue. An N-linked (GlcNAc...) asparagine glycan is attached at Asn515. Asp548 functions as the Proton donor in the catalytic mechanism. Residues Asn549, Asn585, and Asn748 are each glycosylated (N-linked (GlcNAc...) asparagine).

The protein belongs to the glycosyl hydrolase 31 family.

The protein localises to the secreted. The catalysed reaction is Hydrolysis of terminal, non-reducing (1-&gt;4)-linked alpha-D-glucose residues with release of alpha-D-glucose.. It catalyses the reaction Hydrolysis of terminal, non-reducing beta-D-glucosyl residues with release of beta-D-glucose.. Functionally, glucosidase involved in the degradation of cellulosic biomass. Has both alpha- and beta-glucosidase activity. The chain is Probable alpha/beta-glucosidase ARB_02101 from Arthroderma benhamiae (strain ATCC MYA-4681 / CBS 112371) (Trichophyton mentagrophytes).